The following is a 320-amino-acid chain: Glyoxylate/hydroxypyruvate reductase B (320 aa).

Active-site residues include arginine 233 and glutamate 262. Histidine 281 functions as the Proton donor in the catalytic mechanism.

The protein belongs to the D-isomer specific 2-hydroxyacid dehydrogenase family. GhrB subfamily. As to quaternary structure, homodimer.

Its subcellular location is the cytoplasm. The enzyme catalyses glycolate + NADP(+) = glyoxylate + NADPH + H(+). It catalyses the reaction (R)-glycerate + NAD(+) = 3-hydroxypyruvate + NADH + H(+). It carries out the reaction (R)-glycerate + NADP(+) = 3-hydroxypyruvate + NADPH + H(+). Functionally, catalyzes the NADPH-dependent reduction of glyoxylate and hydroxypyruvate into glycolate and glycerate, respectively. The protein is Glyoxylate/hydroxypyruvate reductase B of Pectobacterium carotovorum subsp. carotovorum (strain PC1).